A 104-amino-acid chain; its full sequence is Thioredoxin-3 (104 aa).

The Thioredoxin domain maps to 2-104 (SKVIHVTSNE…TLRSTLEANI (103 aa)). Catalysis depends on nucleophile residues Cys-31 and Cys-34. A disulfide bond links Cys-31 and Cys-34.

The protein belongs to the thioredoxin family.

In terms of biological role, participates in various redox reactions through the reversible oxidation of its active center dithiol to a disulfide and catalyzes dithiol-disulfide exchange reactions. The protein is Thioredoxin-3 (trxC) of Dictyostelium discoideum (Social amoeba).